The chain runs to 898 residues: Serine/threonine-protein kinase PKH3 (898 aa).

A Protein kinase domain is found at 11–293 (FIFKEELGHG…LEQIKRHPYF (283 aa)). ATP-binding positions include 17-25 (LGHGSYSTV) and Lys-41. The Proton acceptor role is filled by Asp-138. Disordered regions lie at residues 435–484 (PPKV…PSTE) and 675–850 (DSKA…EKYS). The segment covering 459 to 468 (PLQTSSIPQK) has biased composition (polar residues). Residues 469–483 (LSTSSASSALSAPST) show a composition bias toward low complexity. Ser-696 bears the Phosphoserine mark. The segment covering 697–721 (IGNNVTTLSYTAKNGSQNNAPQNDN) has biased composition (polar residues). The segment covering 723 to 738 (GEEKPFRIPSSTKDRP) has biased composition (basic and acidic residues). Polar residues-rich tracts occupy residues 740 to 758 (ANST…NNAG), 771 to 782 (SAPSTNTYTNGS), and 789 to 803 (RPST…NILT). Ser-753 bears the Phosphoserine mark. Residues 804-817 (SKKQGSSVFSPSSS) show a composition bias toward low complexity. The span at 818-831 (TTKPQIKTTGYRQP) shows a compositional bias: polar residues. At Ser-871 the chain carries Phosphoserine.

Belongs to the protein kinase superfamily. Ser/Thr protein kinase family.

It carries out the reaction L-seryl-[protein] + ATP = O-phospho-L-seryl-[protein] + ADP + H(+). The enzyme catalyses L-threonyl-[protein] + ATP = O-phospho-L-threonyl-[protein] + ADP + H(+). Serine/threonine-protein kinase which may phosphorylate the same targets substrates as PKH1 and PKH2, 2 upstream activators of PKC1. The sequence is that of Serine/threonine-protein kinase PKH3 (PKH3) from Saccharomyces cerevisiae (strain ATCC 204508 / S288c) (Baker's yeast).